A 279-amino-acid chain; its full sequence is Tryptophan synthase alpha chain (279 aa).

Residues Glu-50 and Asp-61 each act as proton acceptor in the active site.

The protein belongs to the TrpA family. In terms of assembly, tetramer of two alpha and two beta chains.

The enzyme catalyses (1S,2R)-1-C-(indol-3-yl)glycerol 3-phosphate + L-serine = D-glyceraldehyde 3-phosphate + L-tryptophan + H2O. It functions in the pathway amino-acid biosynthesis; L-tryptophan biosynthesis; L-tryptophan from chorismate: step 5/5. The alpha subunit is responsible for the aldol cleavage of indoleglycerol phosphate to indole and glyceraldehyde 3-phosphate. The chain is Tryptophan synthase alpha chain from Brucella abortus (strain S19).